Reading from the N-terminus, the 431-residue chain is Evolutionarily conserved signaling intermediate in Toll pathway, mitochondrial (431 aa).

A mitochondrion-targeting transit peptide spans 1 to 48; the sequence is MSWVQATLLARGLCRAWGGTCGAALTGTSISQVPRRLPRGLHCSAAAH. Lys372 participates in a covalent cross-link: Glycyl lysine isopeptide (Lys-Gly) (interchain with G-Cter in ubiquitin). Positions 400 to 431 are disordered; that stretch reads LQTSSAGLEEPPLPEDHQEEDDNLQRQQQGQS.

It belongs to the ECSIT family. Interacts with MAP3K1, SMAD4 and TRAF6. Interacts with SMAD1 only after BMP4-treatment. Part of the mitochondrial complex I assembly/MCIA complex that comprises at least the core subunits TMEM126B, NDUFAF1, ECSIT and ACAD9 and complement subunits such as COA1 and TMEM186. Interacts with NDUFAF1. Interacts with ACAD9. Interacts with TRIM59. Interacts with TMEM70 and TMEM242. Interacts (when ubiquitinated) with NF-kappa-B subunits RELA and NFKB1. Interacts with RIGI, IFIT1 and MAVS; these interactions promote RLR-mediated type I IFN induction. Interacts with SQSTM1; this interaction inhibits TLR4 signaling via functional regulation of the TRAF6-ECSIT complex. Interacts with cereblon/CRBN; this interaction inhibits the ubiquitination of ECSIT. Ubiquitinated on Lys-372; leading to translocation in the nucleus together with RELA and NFKB1 and expression of NF-kappa-B-dependent genes.

The protein resides in the cytoplasm. The protein localises to the nucleus. It localises to the mitochondrion. Functionally, adapter protein that plays a role in different signaling pathways including TLRs and IL-1 pathways or innate antiviral induction signaling. Plays a role in the activation of NF-kappa-B by forming a signal complex with TRAF6 and TAK1/MAP3K7 to activate TAK1/MAP3K7 leading to activation of IKKs. Once ubiquitinated, interacts with the dissociated RELA and NFKB1 proteins and translocates to the nucleus where it induces NF-kappa-B-dependent gene expression. Plays a role in innate antiviral immune response by bridging the pattern recognition receptors RIGI and MDA5/IFIT1 to the MAVS complex at the mitochondrion. Promotes proteolytic activation of MAP3K1. Involved in the BMP signaling pathway. Required for normal embryonic development. As part of the MCIA complex, involved in the assembly of the mitochondrial complex I. The polypeptide is Evolutionarily conserved signaling intermediate in Toll pathway, mitochondrial (Homo sapiens (Human)).